A 526-amino-acid chain; its full sequence is Clostripain (526 aa).

Residues 1 to 27 form the signal peptide; sequence MLRRKVSTLLMTALITTSFLNSKPVYA. The propeptide occupies 28–50; that stretch reads NPVTKSKDNNLKEVQQVTSKSNK. The propeptide at 182–190 is linker; the sequence is EKSNPRLNR. Cys-231 (nucleophile) is an active-site residue.

It belongs to the peptidase C11 family. In terms of assembly, heterodimer of a light chain and a heavy chain held together by strong non-covalent forces rather than by intramolecular disulfide bridges.

The catalysed reaction is Preferential cleavage: Arg-|-Xaa, including Arg-|-Pro bond, but not Lys-|-Xaa.. Functionally, cysteine endopeptidase with strict specificity. This Hathewaya histolytica (Clostridium histolyticum) protein is Clostripain (cloSI).